Reading from the N-terminus, the 109-residue chain is Probable glutaredoxin slr1562 (109 aa).

Residues 11-109 (LSGRQADGIK…PLLATPPNPA (99 aa)) form the Glutaredoxin domain. Cysteines 31 and 34 form a disulfide.

It belongs to the glutaredoxin family.

In terms of biological role, has a glutathione-disulfide oxidoreductase activity in the presence of NADPH and glutathione reductase. Reduces low molecular weight disulfides and proteins. This is Probable glutaredoxin slr1562 from Synechocystis sp. (strain ATCC 27184 / PCC 6803 / Kazusa).